We begin with the raw amino-acid sequence, 350 residues long: tRNA pseudouridine synthase D (350 aa).

Asp85 (nucleophile) is an active-site residue. The region spanning 160 to 310 is the TRUD domain; that stretch reads GVINYFGEQR…EAARRTILLR (151 aa).

It belongs to the pseudouridine synthase TruD family.

It catalyses the reaction uridine(13) in tRNA = pseudouridine(13) in tRNA. Functionally, responsible for synthesis of pseudouridine from uracil-13 in transfer RNAs. This Idiomarina loihiensis (strain ATCC BAA-735 / DSM 15497 / L2-TR) protein is tRNA pseudouridine synthase D.